The chain runs to 282 residues: F-actin-capping protein subunit alpha (282 aa).

This sequence belongs to the F-actin-capping protein alpha subunit family. Component of the F-actin capping complex, composed of a heterodimer of an alpha and a beta subunit.

It is found in the cytoplasm. Its subcellular location is the cytoskeleton. Functionally, F-actin-capping proteins bind in a Ca(2+)-independent manner to the fast growing ends of actin filaments (barbed end) thereby blocking the exchange of subunits at these ends. Unlike other capping proteins (such as gelsolin and severin), these proteins do not sever actin filaments. The polypeptide is F-actin-capping protein subunit alpha (cap-1) (Caenorhabditis elegans).